A 187-amino-acid chain; its full sequence is uncharacterized protein (187 aa).

Positions 127–172 (KQPQVTLTQLQEELDEAKTRLALKEKELLEALSEISKLRLQLSNQL) form a coiled coil.

This is an uncharacterized protein from Tomato torrado virus (isolate Solanum lycopersicum/Spain/PRIToTV0301/-) (ToTV).